A 127-amino-acid polypeptide reads, in one-letter code: Large ribosomal subunit protein bL20 (127 aa).

The protein belongs to the bacterial ribosomal protein bL20 family.

Binds directly to 23S ribosomal RNA and is necessary for the in vitro assembly process of the 50S ribosomal subunit. It is not involved in the protein synthesizing functions of that subunit. In Bifidobacterium animalis subsp. lactis (strain AD011), this protein is Large ribosomal subunit protein bL20.